The following is a 193-amino-acid chain: Small ribosomal subunit protein uS7 (193 aa).

The protein belongs to the universal ribosomal protein uS7 family. As to quaternary structure, part of the 30S ribosomal subunit.

In terms of biological role, one of the primary rRNA binding proteins, it binds directly to 16S rRNA where it nucleates assembly of the head domain of the 30S subunit. Is located at the subunit interface close to the decoding center. The sequence is that of Small ribosomal subunit protein uS7 from Saccharolobus solfataricus (strain ATCC 35092 / DSM 1617 / JCM 11322 / P2) (Sulfolobus solfataricus).